The chain runs to 429 residues: Histidine--tRNA ligase (429 aa).

This sequence belongs to the class-II aminoacyl-tRNA synthetase family. In terms of assembly, homodimer.

It is found in the cytoplasm. The catalysed reaction is tRNA(His) + L-histidine + ATP = L-histidyl-tRNA(His) + AMP + diphosphate + H(+). The sequence is that of Histidine--tRNA ligase from Chlorobium phaeobacteroides (strain DSM 266 / SMG 266 / 2430).